A 189-amino-acid polypeptide reads, in one-letter code: Ribosome hibernation promotion factor (189 aa).

It belongs to the HPF/YfiA ribosome-associated protein family. Long HPF subfamily. Interacts with 100S ribosomes. Not associated with 70S ribosome monomers, about 1 monomer per ribosome.

It localises to the cytoplasm. In terms of biological role, required for dimerization of active 70S ribosomes into 100S ribosomes in stationary phase; 100S ribosomes are translationally inactive and sometimes present during exponential growth. May not be the only factor implicated. Might negatively regulate the activity of the sigma-54 factor (SigL). In Bacillus subtilis (strain 168), this protein is Ribosome hibernation promotion factor (yvyD).